The following is a 309-amino-acid chain: NADH-cytochrome b5 reductase 1 (309 aa).

The chain crosses the membrane as a helical span at residues 30–50 (FVPYAVAVTAILAGLKLFTGG). The FAD-binding FR-type domain occupies 60–165 (TEFQEFVLKE…RGPKGAMVYT (106 aa)). FAD contacts are provided by residues 145 to 160 (TTLKIGDTMKVRGPKG) and 171 to 208 (HIGMIAGGTGITPMLQIIKAVIRNRPRNGGNDTTKLDL).

The protein belongs to the flavoprotein pyridine nucleotide cytochrome reductase family. In terms of assembly, monomer. Component of the 2-(3-amino-3-carboxypropyl)histidine synthase complex composed of dph1, dph2, dph3 and a NADH-dependent reductase, predominantly cbr1. FAD is required as a cofactor.

Its subcellular location is the mitochondrion outer membrane. The catalysed reaction is 2 Fe(III)-[cytochrome b5] + NADH = 2 Fe(II)-[cytochrome b5] + NAD(+) + H(+). The enzyme catalyses 2 Fe(3+)-[Dph3] + NADH = 2 Fe(2+)-[Dph3] + NAD(+) + H(+). Its pathway is protein modification; peptidyl-diphthamide biosynthesis. NADH-dependent reductase for dph3 and cytochrome b5. Required for the first step of diphthamide biosynthesis, a post-translational modification of histidine which occurs in elongation factor 2. Dph1 and dph2 transfer a 3-amino-3-carboxypropyl (ACP) group from S-adenosyl-L-methionine (SAM) to a histidine residue, the reaction is assisted by a reduction system comprising dph3 and a NADH-dependent reductase, predominantly cbr1. By reducing dph3, also involved in the formation of the tRNA wobble base modification mcm5s 2U (5-methoxycarbonylmethyl-2-thiouridine), mediated by the elongator complex. The cytochrome b5/NADH cytochrome b5 reductase electron transfer system supports the catalytic activity of several sterol biosynthetic enzymes. The polypeptide is NADH-cytochrome b5 reductase 1 (cbr1) (Aspergillus fumigatus (strain ATCC MYA-4609 / CBS 101355 / FGSC A1100 / Af293) (Neosartorya fumigata)).